A 93-amino-acid chain; its full sequence is Stromal cell-derived factor 1 (93 aa).

A signal peptide spans 1–21 (MNAKVVVVLVLVLTALCLSDG). The short motif at 22–23 (KP) is the Receptor activation motif element. The interval 29–33 (RCPCR) is receptor and heparin binding. 2 disulfides stabilise this stretch: Cys30-Cys55 and Cys32-Cys71. Receptor binding stretches follow at residues 39–41 (VAR), 48–50 (KIL), and 60–70 (VARLKNNNRQV). Heparin is bound by residues 41 to 51 (RANVKHLKILN), Arg62, Gln69, and Lys85.

It belongs to the intercrine alpha (chemokine CxC) family. In terms of assembly, monomer or homodimer; in equilibrium. Dimer formation is induced by non acidic pH and the presence of multivalent anions, and by binding to CXCR4 or heparin. Monomeric form is required for full chemotactic activity and resistance to ischemia/reperfusion injury, whereas the dimeric form acts as a partial agonist of CXCR4, stimulating Ca2+ mobilization but with no chemotactic activity and instead acts as a selective antagonist that blocks chemotaxis induced by the monomeric form. Interacts with the N-terminus of ACKR3. Interacts with integrin subunit ITGB3 (via the allosteric site (site 2)). Interacts with TNFAIP6 (via Link domain). As to quaternary structure, (Microbial infection) Interacts with molluscum contagiosum virus protein MC148. In terms of processing, processed forms SDF-1-beta(3-72) and SDF-1-alpha(3-67) are produced after secretion by proteolytic cleavage of isoforms Beta and Alpha, respectively. The N-terminal processing is probably achieved by DPP4. Isoform Alpha is first cleaved at the C-terminus to yield a SDF-1-alpha(1-67) intermediate before being processed at the N-terminus. The C-terminal processing of isoform Alpha is reduced by binding to heparin and, probably, cell surface proteoglycans. As to expression, isoform Alpha and isoform Beta are ubiquitously expressed, with highest levels detected in liver, pancreas and spleen. Isoform Gamma is mainly expressed in heart, with weak expression detected in several other tissues. Isoform Delta, isoform Epsilon and isoform Theta have highest expression levels in pancreas, with lower levels detected in heart, kidney, liver and spleen.

The protein resides in the secreted. In terms of biological role, chemoattractant active on T-lymphocytes and monocytes but not neutrophils. Activates the C-X-C chemokine receptor CXCR4 to induce a rapid and transient rise in the level of intracellular calcium ions and chemotaxis. SDF-1-beta(3-72) and SDF-1-alpha(3-67) show a reduced chemotactic activity. Binding to cell surface proteoglycans seems to inhibit formation of SDF-1-alpha(3-67) and thus to preserve activity on local sites. Also binds to atypical chemokine receptor ACKR3, which activates the beta-arrestin pathway and acts as a scavenger receptor for SDF-1. Binds to the allosteric site (site 2) of integrins and activates integrins ITGAV:ITGB3, ITGA4:ITGB1 and ITGA5:ITGB1 in a CXCR4-independent manner. Acts as a positive regulator of monocyte migration and a negative regulator of monocyte adhesion via the LYN kinase. Stimulates migration of monocytes and T-lymphocytes through its receptors, CXCR4 and ACKR3, and decreases monocyte adherence to surfaces coated with ICAM-1, a ligand for beta-2 integrins. SDF1A/CXCR4 signaling axis inhibits beta-2 integrin LFA-1 mediated adhesion of monocytes to ICAM-1 through LYN kinase. Inhibits CXCR4-mediated infection by T-cell line-adapted HIV-1. Plays a protective role after myocardial infarction. Induces down-regulation and internalization of ACKR3 expressed in various cells. Has several critical functions during embryonic development; required for B-cell lymphopoiesis, myelopoiesis in bone marrow and heart ventricular septum formation. Stimulates the proliferation of bone marrow-derived B-cell progenitors in the presence of IL7 as well as growth of stromal cell-dependent pre-B-cells. This chain is Stromal cell-derived factor 1 (CXCL12), found in Homo sapiens (Human).